The sequence spans 289 residues: MIILKRLLQDKGAVIALGIIVLYVFLGLAAPLVTFYDPNHIDTANKFAGMSFQHLLGTDHLGRDILTRLIYAIRPSLLYVFVALFVSVLIGSILGFLSGYFQGFVDALIMRACDVMLAFPSYVVTLALIALFGMGAENIIMAFILTRWAWFCRVIRTSVMQYTASDHVRFAKTIGMNDMKIIHKHIMPLTLADIAIISSSSMCSMILQISGFSFLGLGVKAPTAEWGMMLNEARKVMFTHPEMMFAPGIAIVIIVMAFNFLSDALQIAIDPRISSKDKLRSVKKGVVQS.

The next 5 membrane-spanning stretches (helical) occupy residues 13 to 33 (AVIA…APLV), 77 to 97 (LLYV…LGFL), 115 to 135 (VMLA…FGMG), 194 to 214 (IAII…GFSF), and 249 to 269 (IAIV…QIAI). The ABC transmembrane type-1 domain occupies 73 to 262 (IRPSLLYVFV…IIVMAFNFLS (190 aa)).

This sequence belongs to the binding-protein-dependent transport system permease family. The complex is composed of two ATP-binding proteins (CntD and CntF), two transmembrane proteins (CntB and CntC) and a solute-binding protein (CntA).

Its subcellular location is the cell membrane. Nickel/cobalt import is reduced in the presence of zinc. In terms of biological role, part of the ABC transporter complex CntABCDF (Opp1) involved in the uptake of metal in complex with the metallophore staphylopine (StP). Involved in the import of divalent metals ions such as nickel, cobalt and zinc. Probably responsible for the translocation of the substrate across the membrane. Plays a major role in nickel/cobalt import in zinc-depleted conditions. Contributes to virulence. Required for full urease activity in vitro. This Staphylococcus aureus (strain NCTC 8325 / PS 47) protein is Metal-staphylopine import system permease protein CntC.